Consider the following 185-residue polypeptide: Thymidine kinase (185 aa).

Residues 10–17 (GPMYSGKT) and 83–86 (DEVQ) each bind ATP. Glutamate 84 acts as the Proton acceptor in catalysis. 4 residues coordinate Zn(2+): cysteine 140, cysteine 143, cysteine 173, and cysteine 176.

This sequence belongs to the thymidine kinase family. As to quaternary structure, homotetramer.

Its subcellular location is the cytoplasm. It catalyses the reaction thymidine + ATP = dTMP + ADP + H(+). In Pseudothermotoga lettingae (strain ATCC BAA-301 / DSM 14385 / NBRC 107922 / TMO) (Thermotoga lettingae), this protein is Thymidine kinase.